The chain runs to 320 residues: Fe-S cluster assembly protein dre2 (320 aa).

Positions 1–130 are N-terminal SAM-like domain; it reads MAKQTLLLSP…KPDIEEMQAV (130 aa). A linker region spans residues 131-213; the sequence is PLRLGRKNDH…DNLLDDSELS (83 aa). Residues 141–166 are disordered; it reads LAGAPSLEGSAAEHPFPPEVSEGKTA. Residues Cys-222, Cys-233, Cys-236, and Cys-238 each coordinate [2Fe-2S] cluster. Residues 222–238 form a fe-S binding site A region; the sequence is CRPKAGKRRRACKDCTC. Cys-283, Cys-286, Cys-294, and Cys-297 together coordinate [4Fe-4S] cluster. 2 short sequence motifs (cx2C motif) span residues 283 to 286 and 294 to 297; these read CGNC and CEGC. A fe-S binding site B region spans residues 283–297; that stretch reads CGNCSLGDAFRCEGC.

The protein belongs to the anamorsin family. As to quaternary structure, monomer. Interacts with tah18. Interacts with mia40. It depends on [2Fe-2S] cluster as a cofactor. [4Fe-4S] cluster serves as cofactor.

The protein localises to the cytoplasm. Its subcellular location is the mitochondrion intermembrane space. Functionally, component of the cytosolic iron-sulfur (Fe-S) protein assembly (CIA) machinery required for the maturation of extramitochondrial Fe-S proteins. Part of an electron transfer chain functioning in an early step of cytosolic Fe-S biogenesis, facilitating the de novo assembly of a [4Fe-4S] cluster on the scaffold complex cfd1-nbp35. Electrons are transferred to dre2 from NADPH via the FAD- and FMN-containing protein tah18. Tah18-dre2 are also required for the assembly of the diferric tyrosyl radical cofactor of ribonucleotide reductase (RNR), probably by providing electrons for reduction during radical cofactor maturation in the catalytic small subunit rnr2. The polypeptide is Fe-S cluster assembly protein dre2 (Neosartorya fischeri (strain ATCC 1020 / DSM 3700 / CBS 544.65 / FGSC A1164 / JCM 1740 / NRRL 181 / WB 181) (Aspergillus fischerianus)).